Reading from the N-terminus, the 482-residue chain is Wax ester synthase/diacylglycerol acyltransferase 9 (482 aa).

Residues 1–195 lie on the Cytoplasmic side of the membrane; that stretch reads MEKKMKEEEE…FRLVLVVCST (195 aa). The Proton acceptor role is filled by histidine 140. A helical transmembrane segment spans residues 196–216; that stretch reads VRLIWNTLVDSFLCMATIFFL. Residues 217–328 lie on the Lumenal side of the membrane; that stretch reads KDTDTPLKGK…AKGSKCRWGN (112 aa). Residues 329 to 349 form a helical membrane-spanning segment; that stretch reads YISVILFPFTIALQSDPLVYL. Residues 350–366 are Cytoplasmic-facing; the sequence is SNVKSMIDRKKNSLITY. A helical transmembrane segment spans residues 367–387; sequence IIYTFSEFVIKAFGINVAVAF. Residues 388-482 lie on the Lumenal side of the membrane; the sequence is QRKIMLNTTM…LEKGLPNHVN (95 aa). The N-linked (GlcNAc...) asparagine glycan is linked to asparagine 394.

The protein in the N-terminal section; belongs to the long-chain O-acyltransferase family. Mostly expressed in stems and siliques.

The protein localises to the cell membrane. The protein resides in the endoplasmic reticulum membrane. The catalysed reaction is an acyl-CoA + a 1,2-diacyl-sn-glycerol = a triacyl-sn-glycerol + CoA. It carries out the reaction a long chain fatty alcohol + a fatty acyl-CoA = a wax ester + CoA. Its pathway is glycerolipid metabolism; triacylglycerol biosynthesis. The protein operates within lipid metabolism. Functionally, bifunctional wax ester synthase/diacylglycerol acyltransferase. Involved in cuticular wax biosynthesis. In Arabidopsis thaliana (Mouse-ear cress), this protein is Wax ester synthase/diacylglycerol acyltransferase 9.